The following is a 519-amino-acid chain: Transketolase, chloroplastic (519 aa).

Asp-11 serves as a coordination point for Mg(2+). Thiamine diphosphate is bound by residues Gly-12 and Asn-41. Mg(2+) is bound by residues Asn-41 and Ile-43. A thiamine diphosphate-binding site is contributed by His-118. Substrate is bound by residues His-118, Arg-212, and Ser-239. Thiamine diphosphate contacts are provided by Glu-266 and Phe-293. Catalysis depends on Glu-266, which acts as the Proton donor. Residues His-317, Asp-325, and Arg-376 each coordinate substrate.

It belongs to the transketolase family. In terms of assembly, homodimer. Mg(2+) serves as cofactor. The cofactor is Ca(2+). Requires Mn(2+) as cofactor. It depends on Co(2+) as a cofactor. Thiamine diphosphate is required as a cofactor. In terms of tissue distribution, constitutively expressed in leaves and roots.

It is found in the plastid. The protein localises to the chloroplast. It catalyses the reaction D-sedoheptulose 7-phosphate + D-glyceraldehyde 3-phosphate = aldehydo-D-ribose 5-phosphate + D-xylulose 5-phosphate. In terms of biological role, catalyzes the transfer of a two-carbon ketol group from a ketose donor to an aldose acceptor, via a covalent intermediate with the cofactor thiamine pyrophosphate. This chain is Transketolase, chloroplastic (TKT3), found in Craterostigma plantagineum (Blue gem).